The sequence spans 199 residues: ATP-dependent Clp protease proteolytic subunit (199 aa).

The active-site Nucleophile is Ser-99. Residue His-124 is part of the active site.

The protein belongs to the peptidase S14 family. As to quaternary structure, fourteen ClpP subunits assemble into 2 heptameric rings which stack back to back to give a disk-like structure with a central cavity, resembling the structure of eukaryotic proteasomes.

It localises to the cytoplasm. It catalyses the reaction Hydrolysis of proteins to small peptides in the presence of ATP and magnesium. alpha-casein is the usual test substrate. In the absence of ATP, only oligopeptides shorter than five residues are hydrolyzed (such as succinyl-Leu-Tyr-|-NHMec, and Leu-Tyr-Leu-|-Tyr-Trp, in which cleavage of the -Tyr-|-Leu- and -Tyr-|-Trp bonds also occurs).. Cleaves peptides in various proteins in a process that requires ATP hydrolysis. Has a chymotrypsin-like activity. Plays a major role in the degradation of misfolded proteins. This is ATP-dependent Clp protease proteolytic subunit from Moorella thermoacetica (strain ATCC 39073 / JCM 9320).